The chain runs to 320 residues: MARCDVLVSADWAESNLHAPKVVFVEVDEDTSAYDRDHIAGAIKLDWRTDLQDPVKRDFVDAQQFSKLLSERGIANEDTVILYGGNNNWFAAYAYWYFKLYGHEKVKLLDGGRKKWELDGRPLSSDPVSRPVTSYTASPPDNTIRAFRDEVLAAINVKNLIDVRSPDEFSGKILAPAHLPQEQSQRPGHIPGAINVPWSRAANEDGTFKSDEELAKLYADAGLDNSKETIAYCRIGERSSHTWFVLRELLGHQNVNIAFGYGPHACPASAYSRMCLTTFFTSLTQRFPQLQLARPFEDLERRGKGLHSVGIKELLVTWPT.

Rhodanese domains follow at residues 18–125 and 154–267; these read HAPK…PLSS and AINV…HACP. Cys233 functions as the Cysteine persulfide intermediate in the catalytic mechanism. Arg238 is a binding site for substrate.

The enzyme catalyses thiosulfate + hydrogen cyanide = thiocyanate + sulfite + 2 H(+). Its function is as follows. May be a sulfotransferase involved in the formation of thiosulfate. The sequence is that of Putative thiosulfate sulfurtransferase 2 (cysA2) from Mycobacterium bovis (strain ATCC BAA-935 / AF2122/97).